The chain runs to 296 residues: Nucleotide-binding protein Rmet_0297 (296 aa).

8-15 provides a ligand contact to ATP; that stretch reads GISGSGKS. Position 57-60 (57-60) interacts with GTP; that stretch reads DIRS.

Belongs to the RapZ-like family.

Functionally, displays ATPase and GTPase activities. In Cupriavidus metallidurans (strain ATCC 43123 / DSM 2839 / NBRC 102507 / CH34) (Ralstonia metallidurans), this protein is Nucleotide-binding protein Rmet_0297.